An 810-amino-acid polypeptide reads, in one-letter code: MPHITHSEFLLEQLKRQRERSFLCDCTVSIGQAQYRAHHNVLAAFSEYFSTQSVDAGREDPTITLDPESVSSAIFEKLLTYIYTGDLNMDREEIESVQKAASYLGMPEVVARCTLSQDNIKNVGSPMRQAEYEDPRSPLSPDDYEPLEPISEVEERELLREDRAGDDLVSMDEAQSSSEQTPQRVGKRGRKPKTRLYEDEFEVETISAQRGRGRGRGRPRGRPRVRPLSSDSTDQSPAHQAMSPNGSSTSRGSGRPRGRPRVRPLSTANEDPRNVEDDPAANKDQEVEKGNEEQKKETGEKDDGKNDTDNPEEVTAFKRGRGRPRIKPVSTEDQTTNSENVTTNAEDGSEPAKTKDSEGTGRKRGRPRSKPVSSEDPESVISVEISGEEAGEETSQDAEKHTEEGTEDSESNPGNSVRISKRKRILSRKLKESQAGDEEEEEEEEMDDEFENDNEDWAGEEEVKPVQDKHRPICNICGNLFSEMSSLRRHMRIHKGLKPYQCTLCTRSFRQGNQLKTHMRIHTGEKPFTCTSCDSRFAQKCQLVYHCRMHHGEEKPYKCEFCGAAFATSSNLKIHIRKHSGEKPYECGECGKRFTQASTLMYHKRRHTGEKPYICDTCGMAFAVSSSLIAHNRKHTGVTPYICLDCGKPCLTAGELRKHMDVHNDIYSLKKHSILKHNVVPELETTQTSKTDPTQCPLNIPIDHQGLIARVRSALVDSQDHEIQMEPPLPILPPETSLTIQQSAEPQMIIQHADGSEPSMIFQHAEASEAPMLIQHGEPGEQVSYVVEQYEIPATAEMEHTQIVIVQTID.

In terms of domain architecture, BTB spans 24–91 (CDCTVSIGQA…IYTGDLNMDR (68 aa)). Disordered regions lie at residues 122–146 (NVGSPMRQAEYEDPRSPLSPDDYEP) and 169–466 (VSMD…VKPV). A compositionally biased stretch (polar residues) spans 173–183 (EAQSSSEQTPQ). Basic residues-rich tracts occupy residues 185–194 (VGKRGRKPKT) and 211–225 (GRGRGRGRPRGRPRV). Over residues 229 to 238 (SSDSTDQSPA) the composition is skewed to polar residues. Residues 243-253 (SPNGSSTSRGS) show a composition bias toward low complexity. The a.T hook 1 DNA-binding region spans 254–266 (GRPRGRPRVRPLS). Basic and acidic residues predominate over residues 270-308 (EDPRNVEDDPAANKDQEVEKGNEEQKKETGEKDDGKNDT). A DNA-binding region (a.T hook 2) is located at residues 318–330 (KRGRGRPRIKPVS). Positions 331–346 (TEDQTTNSENVTTNAE) are enriched in polar residues. Residues 350–361 (EPAKTKDSEGTG) are compositionally biased toward basic and acidic residues. Residues 361–373 (GRKRGRPRSKPVS) constitute a DNA-binding region (a.T hook 3). Residues 386–396 (SGEEAGEETSQ) are compositionally biased toward acidic residues. Residues 419–428 (ISKRKRILSR) are compositionally biased toward basic residues. A Nuclear localization signal motif is present at residues 428–432 (RKLKE). The segment covering 435–460 (AGDEEEEEEEEMDDEFENDNEDWAGE) has biased composition (acidic residues). C2H2-type zinc fingers lie at residues 472-494 (PICNICGNLFSEMSSLRRHMRIH), 500-522 (YQCTLCTRSFRQGNQLKTHMRIH), 528-551 (FTCTSCDSRFAQKCQLVYHCRMHH), 557-579 (YKCEFCGAAFATSSNLKIHIRKH), 585-607 (YECGECGKRFTQASTLMYHKRRH), 613-635 (YICDTCGMAFAVSSSLIAHNRKH), and 641-663 (YICLDCGKPCLTAGELRKHMDVH).

Belongs to the krueppel C2H2-type zinc-finger protein family.

Its subcellular location is the nucleus. This Danio rerio (Zebrafish) protein is Myoneurin (mynn).